Consider the following 95-residue polypeptide: MKDPRDIIKRPVITERSTELMTEKKYTFEVDVKANKTEVKDAIEAIFGVKVAKVNIMNYKGKFKRVGRYSGLTNRRRKAIVTLTPDSKEIELFEV.

Belongs to the universal ribosomal protein uL23 family. In terms of assembly, part of the 50S ribosomal subunit. Contacts protein L29, and trigger factor when it is bound to the ribosome.

In terms of biological role, one of the early assembly proteins it binds 23S rRNA. One of the proteins that surrounds the polypeptide exit tunnel on the outside of the ribosome. Forms the main docking site for trigger factor binding to the ribosome. This chain is Large ribosomal subunit protein uL23, found in Anoxybacillus flavithermus (strain DSM 21510 / WK1).